Here is a 224-residue protein sequence, read N- to C-terminus: Octanoyltransferase (224 aa).

A BPL/LPL catalytic domain is found at 45–223 (PSNKQAVWML…SLNKRFGLLW (179 aa)). Substrate is bound by residues 87 to 94 (RGGDVTHH), 154 to 156 (SIG), and 167 to 169 (GIA). Cys-185 serves as the catalytic Acyl-thioester intermediate.

The protein belongs to the LipB family.

Its subcellular location is the cytoplasm. The catalysed reaction is octanoyl-[ACP] + L-lysyl-[protein] = N(6)-octanoyl-L-lysyl-[protein] + holo-[ACP] + H(+). It functions in the pathway protein modification; protein lipoylation via endogenous pathway; protein N(6)-(lipoyl)lysine from octanoyl-[acyl-carrier-protein]: step 1/2. Its function is as follows. Catalyzes the transfer of endogenously produced octanoic acid from octanoyl-acyl-carrier-protein onto the lipoyl domains of lipoate-dependent enzymes. Lipoyl-ACP can also act as a substrate although octanoyl-ACP is likely to be the physiological substrate. The chain is Octanoyltransferase from Prochlorococcus marinus (strain SARG / CCMP1375 / SS120).